Reading from the N-terminus, the 30-residue chain is GTPCGESCVYIPCISGVIGCSCTDKVCYLN.

Residues 1-30 (GTPCGESCVYIPCISGVIGCSCTDKVCYLN) constitute a cross-link (cyclopeptide (Gly-Asn)). Intrachain disulfides connect Cys-4/Cys-20, Cys-8/Cys-22, and Cys-13/Cys-27.

This is a cyclic peptide.

Probably participates in a plant defense mechanism. This chain is Kalata-B5, found in Oldenlandia affinis.